A 201-amino-acid chain; its full sequence is Recombination protein RecR (201 aa).

A C4-type zinc finger spans residues C57–C72. The 96-residue stretch at G81 to P176 folds into the Toprim domain.

Belongs to the RecR family.

Its function is as follows. May play a role in DNA repair. It seems to be involved in an RecBC-independent recombinational process of DNA repair. It may act with RecF and RecO. This is Recombination protein RecR from Histophilus somni (strain 2336) (Haemophilus somnus).